Reading from the N-terminus, the 829-residue chain is Pre-mRNA-splicing factor syf1 (829 aa).

12 HAT repeats span residues 15-47, 49-81, 93-125, 127-161, 163-182, 277-312, 380-418, 420-456, 473-505, 544-578, 581-615, and 689-723; these read SLVSEEDFPYEQDIVRNPGSTKPWLAYIEYKLQ, GTVQEQAYIMERACVQLPRSYKLWKMYLRFRTK, SEYQKVNSLFERALILLNKMPRIWEMYLKFLMQ, PLVTHTRRTFDRALRALPITQHNRIWALYRPFANS, EGETAVKIWRRYMQVHPEDA, GSFERARDVFEEGITTVMTVRDFTLVFDSYTEFEES, DNKEEVVKTYLDAIEAIQPKKAVGALHQLWTNYAKFYEA, GDLSSARRIMEKAVKVPYKSVAELADMWIEWAEMELR, APKRSTVDYFDETLSPQQRVHKSWKLWSFYVDL, KYFEESFKIYERGLDLFSYPVAFELWNLYLTKAVD, ISIERLRDLFEQAVEDCPPKFAKVIYLMYGNLEEE, and GEIDRARAIYGHASQFCDPRTNPGFWTKWDQFEVQ. The tract at residues 799 to 829 is disordered; sequence AASEGPKGGSMPVQPVEVHNPDAIDLDEMDE.

This sequence belongs to the crooked-neck family. In terms of assembly, associated with the spliceosome.

It is found in the nucleus. Its function is as follows. Involved in pre-mRNA splicing and cell cycle progression. The polypeptide is Pre-mRNA-splicing factor syf1 (msp-41) (Neurospora crassa (strain ATCC 24698 / 74-OR23-1A / CBS 708.71 / DSM 1257 / FGSC 987)).